The chain runs to 317 residues: Orange carotenoid-binding protein (317 aa).

The OCP N-terminal domain occupies 18–169 (ADVVPATIAR…DMGFTAGKDG (152 aa)). Echinenone contacts are provided by residues 34–38 (EDQLA), 37–44 (LALIWFAY), 80–83 (TQAM), 107–117 (LGFWYRLGELM), 125–129 (IPAGY), 151–161 (ITVLRNAVVDM), Tyr201, 245–250 (CQNLKL), 273–284 (VQTPWFGGNVGM), and Trp288.

Belongs to the orange carotenoid-binding protein family. As to quaternary structure, monomer. Interacts with the APC core of the phycobilisome (PB), probably at a ratio of 1:1 in a light-independent manner; possibly only OCP-R binds to PBs. Interacts with FRP. Detachment from PBs is accelerated by FPR. The cofactor is 3'-hydroxyechinenone. Post-translationally, proteolytically cleaved into a red 16.7 kDa form named red carotenoid-binding protein (RCP) which lacks 15 residues from the N-terminus and approximately 150 residues from the C-terminus.

The protein resides in the cellular thylakoid membrane. Its function is as follows. Acts as a blue-light photoreceptor and photo-protectant. Essential for inhibiting damaged induced by excess blue-green light via a process known as non-photochemical quenching (NPQ). In the dark or dim light the stable inactive form (OCP-O) is orange, upon illumination with blue-green light it converts to a metastable active red form (OCP-R), inducing energy dissipation, quenching cellular fluorescence via NPQ. One OCP-R molecule is sufficient to quench 1 phycobilisome. More OCP-R accumulates under high-light and low temperature; in the dark OCP-R spontaneously reverts to OCP-O. Reversion of OCP-O is accelerated by FRP. A kinetic study suggests conversion of OCP-O to OCP-R is limited by cis-trans proline isomerization of either Gln224-Pro225 or Pro225-Pro226. The polypeptide is Orange carotenoid-binding protein (Synechocystis sp. (strain ATCC 27184 / PCC 6803 / Kazusa)).